The sequence spans 688 residues: Translation initiation factor IF-2 (688 aa).

Positions 50–62 are enriched in basic and acidic residues; sequence LLSGKEKSEKTKE. Residues 50-95 are disordered; that stretch reads LLSGKEKSEKTKEEDDEIETTAKNPIKESINNKKSNKRDDKNEKVN. Low complexity predominate over residues 72-82; sequence KNPIKESINNK. Residues 86–95 are compositionally biased toward basic and acidic residues; sequence KRDDKNEKVN. Residues 187 to 354 form the tr-type G domain; it reads KRSPIITVMG…MILLSSEILE (168 aa). The G1 stretch occupies residues 196-203; that stretch reads GHVDHGKT. A GTP-binding site is contributed by 196–203; that stretch reads GHVDHGKT. Positions 221 to 225 are G2; that stretch reads GITQH. Residues 242–245 form a G3 region; sequence DTPG. GTP is bound by residues 242 to 246 and 296 to 299; these read DTPGH and NKID. Positions 296–299 are G4; it reads NKID. A G5 region spans residues 332 to 334; that stretch reads SAH.

The protein belongs to the TRAFAC class translation factor GTPase superfamily. Classic translation factor GTPase family. IF-2 subfamily.

It is found in the cytoplasm. One of the essential components for the initiation of protein synthesis. Protects formylmethionyl-tRNA from spontaneous hydrolysis and promotes its binding to the 30S ribosomal subunits. Also involved in the hydrolysis of GTP during the formation of the 70S ribosomal complex. This is Translation initiation factor IF-2 from Clostridium botulinum (strain Langeland / NCTC 10281 / Type F).